Reading from the N-terminus, the 370-residue chain is Alanine racemase (370 aa).

Residue Lys36 is the Proton acceptor; specific for D-alanine of the active site. Lys36 is subject to N6-(pyridoxal phosphate)lysine. Residue Arg134 coordinates substrate. The Proton acceptor; specific for L-alanine role is filled by Tyr265. Met313 provides a ligand contact to substrate.

Belongs to the alanine racemase family. Requires pyridoxal 5'-phosphate as cofactor.

The enzyme catalyses L-alanine = D-alanine. The protein operates within amino-acid biosynthesis; D-alanine biosynthesis; D-alanine from L-alanine: step 1/1. Catalyzes the interconversion of L-alanine and D-alanine. May also act on other amino acids. The chain is Alanine racemase (alr) from Desulforamulus reducens (strain ATCC BAA-1160 / DSM 100696 / MI-1) (Desulfotomaculum reducens).